The sequence spans 47 residues: PhoP/PhoQ regulator MgrB (47 aa).

Residues W6–V26 form a helical membrane-spanning segment.

The protein belongs to the MgrB family. As to quaternary structure, may form homooligomers. Probably interacts with the periplasmic domain of PhoQ.

The protein resides in the cell inner membrane. PhoP-regulated transcription is redox-sensitive, being activated when the periplasm becomes more reducing. MgrB acts between DsbA/DsbB and PhoP/PhoQ in this pathway. Represses PhoP/PhoQ signaling, possibly by binding to the periplasmic domain of PhoQ, altering its activity and that of downstream effector PhoP. The protein is PhoP/PhoQ regulator MgrB of Enterobacter sp. (strain 638).